We begin with the raw amino-acid sequence, 158 residues long: Ribosome maturation factor RimP (158 aa).

The protein belongs to the RimP family.

It is found in the cytoplasm. In terms of biological role, required for maturation of 30S ribosomal subunits. The protein is Ribosome maturation factor RimP of Aquifex aeolicus (strain VF5).